The chain runs to 117 residues: NADH-ubiquinone oxidoreductase chain 3 (117 aa).

3 helical membrane-spanning segments follow: residues 8–28, 61–81, and 86–106; these read LIYFLFSLALASLIIFLSFIF, LVAILFIIFDLEVTFLFPWAV, and IGFFGFWTMMAFLIILTIGFI.

The protein belongs to the complex I subunit 3 family.

Its subcellular location is the mitochondrion membrane. The enzyme catalyses a ubiquinone + NADH + 5 H(+)(in) = a ubiquinol + NAD(+) + 4 H(+)(out). In terms of biological role, core subunit of the mitochondrial membrane respiratory chain NADH dehydrogenase (Complex I) that is believed to belong to the minimal assembly required for catalysis. Complex I functions in the transfer of electrons from NADH to the respiratory chain. The immediate electron acceptor for the enzyme is believed to be ubiquinone. The protein is NADH-ubiquinone oxidoreductase chain 3 (ND3) of Tetraselmis subcordiformis (Marine green alga).